The primary structure comprises 274 residues: 2,3,4,5-tetrahydropyridine-2,6-dicarboxylate N-succinyltransferase (274 aa).

R104 and D141 together coordinate substrate.

It belongs to the transferase hexapeptide repeat family. Homotrimer.

It is found in the cytoplasm. The enzyme catalyses (S)-2,3,4,5-tetrahydrodipicolinate + succinyl-CoA + H2O = (S)-2-succinylamino-6-oxoheptanedioate + CoA. Its pathway is amino-acid biosynthesis; L-lysine biosynthesis via DAP pathway; LL-2,6-diaminopimelate from (S)-tetrahydrodipicolinate (succinylase route): step 1/3. This chain is 2,3,4,5-tetrahydropyridine-2,6-dicarboxylate N-succinyltransferase, found in Shewanella pealeana (strain ATCC 700345 / ANG-SQ1).